A 475-amino-acid chain; its full sequence is uncharacterized protein (475 aa).

Positions 42-292 (NLQNSLTGKT…NTRKGQRHNN (251 aa)) are disordered. 2 stretches are compositionally biased toward basic and acidic residues: residues 59-72 (EANH…KSED) and 119-134 (IAEK…DDSQ). Polar residues-rich tracts occupy residues 150–159 (ITPNFTHTPI) and 220–242 (NNTF…TSED). Residues 243–263 (SSSQAPHHSSSSGHAPSQQGG) are compositionally biased toward low complexity. Basic residues predominate over residues 277–289 (FHHKGRNTRKGQR). In terms of domain architecture, HTH La-type RNA-binding spans 319-408 (NPYLCDVQAF…MSIKVRRKET (90 aa)). At Thr-408 the chain carries Phosphothreonine. Ser-410 carries the post-translational modification Phosphoserine.

It localises to the cytoplasm. This is an uncharacterized protein from Schizosaccharomyces pombe (strain 972 / ATCC 24843) (Fission yeast).